The following is a 168-amino-acid chain: MSMNLLPWRTYQHQKRLRRLAFYIALFILLAINLMLAFSNLIEQQKQNLQAQQKSFEQLNQQLHKTTMQIDQLRIAVKVGEVLTSIPNEQVKKSLQQLSELPFQQGELNKFKQDANNLSLEGNAQDQTEFELIHQFLKKHFPNVKLSQVQPEQDTLFFHFDVEQGAEK.

Its function is as follows. Involved in transformation (genetic competence for DNA uptake). This chain is Competence protein B (comB), found in Haemophilus influenzae (strain ATCC 51907 / DSM 11121 / KW20 / Rd).